Reading from the N-terminus, the 321-residue chain is Tyrosine recombinase XerC (321 aa).

Residues 16–107 enclose the Core-binding (CB) domain; that stretch reads PSIAQEMTRW…GLRSFGRFLE (92 aa). Residues 128–315 enclose the Tyr recombinase domain; it reads SLPKPLPMAS…DSERLLEVYA (188 aa). Residues arginine 173, lysine 199, histidine 267, arginine 270, and histidine 293 contribute to the active site. Tyrosine 302 acts as the O-(3'-phospho-DNA)-tyrosine intermediate in catalysis.

Belongs to the 'phage' integrase family. XerC subfamily. As to quaternary structure, forms a cyclic heterotetrameric complex composed of two molecules of XerC and two molecules of XerD.

It localises to the cytoplasm. Its function is as follows. Site-specific tyrosine recombinase, which acts by catalyzing the cutting and rejoining of the recombining DNA molecules. The XerC-XerD complex is essential to convert dimers of the bacterial chromosome into monomers to permit their segregation at cell division. It also contributes to the segregational stability of plasmids. In Bradyrhizobium diazoefficiens (strain JCM 10833 / BCRC 13528 / IAM 13628 / NBRC 14792 / USDA 110), this protein is Tyrosine recombinase XerC.